Reading from the N-terminus, the 688-residue chain is Elongation factor G (688 aa).

The tr-type G domain maps to 8–282 (KNFRNFGIMA…AVVDFLPSPV (275 aa)). GTP is bound by residues 17 to 24 (AHIDAGKT), 81 to 85 (DTPGH), and 135 to 138 (NKMD).

It belongs to the TRAFAC class translation factor GTPase superfamily. Classic translation factor GTPase family. EF-G/EF-2 subfamily.

It is found in the cytoplasm. Catalyzes the GTP-dependent ribosomal translocation step during translation elongation. During this step, the ribosome changes from the pre-translocational (PRE) to the post-translocational (POST) state as the newly formed A-site-bound peptidyl-tRNA and P-site-bound deacylated tRNA move to the P and E sites, respectively. Catalyzes the coordinated movement of the two tRNA molecules, the mRNA and conformational changes in the ribosome. The protein is Elongation factor G (fusA) of Mycoplasma genitalium (strain ATCC 33530 / DSM 19775 / NCTC 10195 / G37) (Mycoplasmoides genitalium).